The sequence spans 96 residues: MSRSCELTGKGVQSGNNVSHANNKTKRKFLPNLCNVTLISDALGQRFRLRVSAAALRSVEHRGGLDAFLLKADETELSMRARLLRRQIVKKAAEAA.

Over residues 1 to 22 (MSRSCELTGKGVQSGNNVSHAN) the composition is skewed to polar residues. The interval 1 to 24 (MSRSCELTGKGVQSGNNVSHANNK) is disordered.

The protein belongs to the bacterial ribosomal protein bL28 family.

This is Large ribosomal subunit protein bL28 from Sinorhizobium medicae (strain WSM419) (Ensifer medicae).